Reading from the N-terminus, the 526-residue chain is MKLFNPRLIVFIFALLLGVGFSVPSLLETKGPKITLGLDLRGGLNMLLGVQTDEALKNKYLSLASALEYNAKKQNILLKDIKSSLEGISFELLDEDEAKKLDALLLELQGHSQFEIKKEAEFYSVKLTPLEQEELRKNTILQVIGIIRNRLDQFGLAEPVVIQQGREEISVQLPGIKTLEEERRAKDLISKSAHLQMMAVDEEHNKDAMNMTDLEAQKLGSVLLSDAEMGGKILLKAIPILDGEMLTDAKVVYDQNNQPVVSFTLDAQGAKIFGDFSGANVGKRMAIVLDNKVYSAPVIRERIGGGSGQISGNFSVAQASDLAIALRSGAMNAPIQVLEKRIVGPSLGKDSIKTSIIALVGGFILVMGFMALYYSMAGVIACMALVVNLFLIVAVMAIFGATLTLPGMAGIVLTVGIAVDANIIINERIREVLREGEGVVKAIHLGYINASRAIFDSNITSLIASVLLYAYGTGAIKGFALTTGIGILASIITAIIGTQGIYQALLPKLAQTKSLYFWFGVKNKRA.

Helical transmembrane passes span 8-28 (LIVFIFALLLGVGFSVPSLLE), 356-376 (IIALVGGFILVMGFMALYYSM), 379-399 (VIACMALVVNLFLIVAVMAIF), 405-425 (LPGMAGIVLTVGIAVDANIII), 453-473 (AIFDSNITSLIASVLLYAYGT), and 478-498 (GFALTTGIGILASIITAIIGT).

It belongs to the SecD/SecF family. SecD subfamily. In terms of assembly, forms a complex with SecF. Part of the essential Sec protein translocation apparatus which comprises SecA, SecYEG and auxiliary proteins SecDF-YajC and YidC.

It is found in the cell inner membrane. In terms of biological role, part of the Sec protein translocase complex. Interacts with the SecYEG preprotein conducting channel. SecDF uses the proton motive force (PMF) to complete protein translocation after the ATP-dependent function of SecA. The chain is Protein translocase subunit SecD from Helicobacter pylori (strain J99 / ATCC 700824) (Campylobacter pylori J99).